Consider the following 235-residue polypeptide: MIYDTNLALQLRQGTTKAHSMAENVSFVKSFLGGVVDKQAYRQLIANFYFVYSAIEDEMKRHQESQIIKPIYFEELNRKSSLEEDLQFYYGLEWQDKIFPSPATKVYINRIHEISNTSPELLIAHCYTRYLGDLSGGQILKKITQSAMNLSGGEGTAFYEFKDIKDEKNFKQNYRLALDSIHLSDSAIKSIVSEANIAFKLNMKIFQELNSNFIKIIAIFLFNFIKRIKLPGFKS.

His19 is a heme b binding site.

It belongs to the heme oxygenase family.

The protein resides in the plastid. Its subcellular location is the chloroplast. The catalysed reaction is heme b + 3 reduced [NADPH--hemoprotein reductase] + 3 O2 = biliverdin IXalpha + CO + Fe(2+) + 3 oxidized [NADPH--hemoprotein reductase] + 3 H2O + H(+). Its function is as follows. Catalyzes the opening of the heme ring with the release of iron. Key enzyme in the synthesis of the chromophoric part of the photosynthetic antennae. The polypeptide is Heme oxygenase (pbsA) (Rhodella violacea (Red alga)).